The primary structure comprises 919 residues: Isoleucine--tRNA ligase (919 aa).

A 'HIGH' region motif is present at residues 59-69 (PYANGHLHIGH). E570 is an L-isoleucyl-5'-AMP binding site. The short motif at 611–615 (KMSKS) is the 'KMSKS' region element. Residue K614 participates in ATP binding. Positions 893, 896, 908, and 911 each coordinate Zn(2+).

This sequence belongs to the class-I aminoacyl-tRNA synthetase family. IleS type 1 subfamily. Monomer. Requires Zn(2+) as cofactor.

The protein resides in the cytoplasm. The catalysed reaction is tRNA(Ile) + L-isoleucine + ATP = L-isoleucyl-tRNA(Ile) + AMP + diphosphate. In terms of biological role, catalyzes the attachment of isoleucine to tRNA(Ile). As IleRS can inadvertently accommodate and process structurally similar amino acids such as valine, to avoid such errors it has two additional distinct tRNA(Ile)-dependent editing activities. One activity is designated as 'pretransfer' editing and involves the hydrolysis of activated Val-AMP. The other activity is designated 'posttransfer' editing and involves deacylation of mischarged Val-tRNA(Ile). In Campylobacter curvus (strain 525.92), this protein is Isoleucine--tRNA ligase.